The following is a 240-amino-acid chain: Uridylate kinase (240 aa).

An ATP-binding site is contributed by 13–16 (KFSG). UMP is bound at residue G55. G56 and R60 together coordinate ATP. Residues D76 and 137 to 144 (TGNPFFTT) each bind UMP. ATP is bound by residues T164, Y170, and D173.

This sequence belongs to the UMP kinase family. As to quaternary structure, homohexamer.

The protein localises to the cytoplasm. The catalysed reaction is UMP + ATP = UDP + ADP. The protein operates within pyrimidine metabolism; CTP biosynthesis via de novo pathway; UDP from UMP (UMPK route): step 1/1. Its activity is regulated as follows. Inhibited by UTP. In terms of biological role, catalyzes the reversible phosphorylation of UMP to UDP. The protein is Uridylate kinase of Helicobacter pylori (strain HPAG1).